Consider the following 188-residue polypeptide: GTP cyclohydrolase 1 (188 aa).

Positions 78, 81, and 150 each coordinate Zn(2+).

This sequence belongs to the GTP cyclohydrolase I family. Toroid-shaped homodecamer, composed of two pentamers of five dimers.

The enzyme catalyses GTP + H2O = 7,8-dihydroneopterin 3'-triphosphate + formate + H(+). Its pathway is cofactor biosynthesis; 7,8-dihydroneopterin triphosphate biosynthesis; 7,8-dihydroneopterin triphosphate from GTP: step 1/1. This Halalkalibacterium halodurans (strain ATCC BAA-125 / DSM 18197 / FERM 7344 / JCM 9153 / C-125) (Bacillus halodurans) protein is GTP cyclohydrolase 1.